Consider the following 304-residue polypeptide: Aspartate carbamoyltransferase catalytic subunit (304 aa).

Carbamoyl phosphate-binding residues include Arg-56 and Thr-57. Residue Lys-85 coordinates L-aspartate. The carbamoyl phosphate site is built by Arg-106, His-134, and Gln-137. L-aspartate-binding residues include Arg-167 and Arg-226. Residues Leu-265 and Pro-266 each coordinate carbamoyl phosphate.

It belongs to the aspartate/ornithine carbamoyltransferase superfamily. ATCase family. As to quaternary structure, heterooligomer of catalytic and regulatory chains.

It carries out the reaction carbamoyl phosphate + L-aspartate = N-carbamoyl-L-aspartate + phosphate + H(+). Its pathway is pyrimidine metabolism; UMP biosynthesis via de novo pathway; (S)-dihydroorotate from bicarbonate: step 2/3. Catalyzes the condensation of carbamoyl phosphate and aspartate to form carbamoyl aspartate and inorganic phosphate, the committed step in the de novo pyrimidine nucleotide biosynthesis pathway. This is Aspartate carbamoyltransferase catalytic subunit from Picrophilus torridus (strain ATCC 700027 / DSM 9790 / JCM 10055 / NBRC 100828 / KAW 2/3).